The primary structure comprises 556 residues: Calcium-dependent protein kinase 5 (556 aa).

Positions 1–40 are disordered; it reads MGNSCRGSFKDKLDEGDNNKPEDYSKTSTTNLSSNSDHSP. Gly2 carries the N-myristoyl glycine lipid modification. Residues 8 to 25 are compositionally biased toward basic and acidic residues; the sequence is SFKDKLDEGDNNKPEDYS. Residues 26–39 show a composition bias toward low complexity; that stretch reads KTSTTNLSSNSDHS. The region spanning 97 to 355 is the Protein kinase domain; it reads YTLSRKLGQG…AHEVLRHPWI (259 aa). Residues 103 to 111 and Lys126 each bind ATP; that span reads LGQGQFGTT. Asp221 acts as the Proton acceptor in catalysis. At Ser261 the chain carries Phosphoserine. Positions 361-391 are autoinhibitory domain; sequence APDRALDPAVLSRLKQFSAMNKLKKMALKVI. EF-hand domains follow at residues 398–433, 434–469, 470–505, and 509–539; these read EEIAGLREMFQAMDTDNSGAITFDELKAGLRKYGST, LKDTEIHDLMDAADVDNSGTIDYSEFIAATIHLNKL, EREEHLVAAFQYFDKDGSGFITIDELQQACVEHGMA, and LEDIIKEVDQNNDGKIDYGEFVEMMQKGNAG. Residues Asp411, Asp413, Ser415, Glu422, Asp447, Asp449, Ser451, Thr453, Glu458, Asp483, Asp485, Ser487, Glu494, Asp517, Asn519, Asp521, Lys523, and Glu528 each contribute to the Ca(2+) site.

This sequence belongs to the protein kinase superfamily. Ser/Thr protein kinase family. CDPK subfamily.

Its subcellular location is the membrane. It carries out the reaction L-seryl-[protein] + ATP = O-phospho-L-seryl-[protein] + ADP + H(+). It catalyses the reaction L-threonyl-[protein] + ATP = O-phospho-L-threonyl-[protein] + ADP + H(+). With respect to regulation, activated by calcium. Autophosphorylation may play an important role in the regulation of the kinase activity. Its function is as follows. May play a role in signal transduction pathways that involve calcium as a second messenger. In Arabidopsis thaliana (Mouse-ear cress), this protein is Calcium-dependent protein kinase 5 (CPK5).